Consider the following 160-residue polypeptide: Ribosome maturation factor RimP (160 aa).

The protein belongs to the RimP family.

The protein resides in the cytoplasm. Required for maturation of 30S ribosomal subunits. The polypeptide is Ribosome maturation factor RimP (Orientia tsutsugamushi (strain Ikeda) (Rickettsia tsutsugamushi)).